Consider the following 300-residue polypeptide: Mycothiol acetyltransferase (300 aa).

2 consecutive N-acetyltransferase domains span residues 4–140 and 151–300; these read IDWR…RPLT and VRLA…AVAD. Residue Asp-36 coordinates 1D-myo-inositol 2-(L-cysteinylamino)-2-deoxy-alpha-D-glucopyranoside. Residue 79 to 81 participates in acetyl-CoA binding; the sequence is LVV. 1D-myo-inositol 2-(L-cysteinylamino)-2-deoxy-alpha-D-glucopyranoside is bound by residues Glu-178, Lys-219, and Glu-227. 231 to 233 provides a ligand contact to acetyl-CoA; it reads VGV. Tyr-269 provides a ligand contact to 1D-myo-inositol 2-(L-cysteinylamino)-2-deoxy-alpha-D-glucopyranoside. Residue 274-279 participates in acetyl-CoA binding; that stretch reads NGAAVK.

The protein belongs to the acetyltransferase family. MshD subfamily. In terms of assembly, monomer.

The enzyme catalyses 1D-myo-inositol 2-(L-cysteinylamino)-2-deoxy-alpha-D-glucopyranoside + acetyl-CoA = mycothiol + CoA + H(+). In terms of biological role, catalyzes the transfer of acetyl from acetyl-CoA to desacetylmycothiol (Cys-GlcN-Ins) to form mycothiol. The chain is Mycothiol acetyltransferase from Mycobacterium sp. (strain MCS).